A 269-amino-acid polypeptide reads, in one-letter code: Shikimate dehydrogenase (NADP(+)) (269 aa).

Shikimate-binding positions include 17 to 19 (SKS) and threonine 64. Catalysis depends on lysine 68, which acts as the Proton acceptor. Residue aspartate 80 coordinates NADP(+). Shikimate is bound by residues asparagine 89 and aspartate 105. Residues 130-134 (GAGGA), 154-159 (NRTRAK), and methionine 213 each bind NADP(+). Position 215 (tyrosine 215) interacts with shikimate. Glycine 237 provides a ligand contact to NADP(+).

Belongs to the shikimate dehydrogenase family. As to quaternary structure, homodimer.

The catalysed reaction is shikimate + NADP(+) = 3-dehydroshikimate + NADPH + H(+). It participates in metabolic intermediate biosynthesis; chorismate biosynthesis; chorismate from D-erythrose 4-phosphate and phosphoenolpyruvate: step 4/7. Its function is as follows. Involved in the biosynthesis of the chorismate, which leads to the biosynthesis of aromatic amino acids. Catalyzes the reversible NADPH linked reduction of 3-dehydroshikimate (DHSA) to yield shikimate (SA). This Neisseria gonorrhoeae (strain ATCC 700825 / FA 1090) protein is Shikimate dehydrogenase (NADP(+)).